Reading from the N-terminus, the 586-residue chain is Membrane protein insertase YidC (586 aa).

Transmembrane regions (helical) follow at residues 5-25 (TLIG…LMAP), 371-391 (GVII…LTMA), 436-456 (LGGC…FYVF), 486-506 (IPLY…AVFF), and 522-542 (FMMY…PSGL).

It belongs to the OXA1/ALB3/YidC family. Type 1 subfamily. As to quaternary structure, interacts with the Sec translocase complex via SecD. Specifically interacts with transmembrane segments of nascent integral membrane proteins during membrane integration.

It localises to the cell inner membrane. In terms of biological role, required for the insertion and/or proper folding and/or complex formation of integral membrane proteins into the membrane. Involved in integration of membrane proteins that insert both dependently and independently of the Sec translocase complex, as well as at least some lipoproteins. Aids folding of multispanning membrane proteins. This Chloroherpeton thalassium (strain ATCC 35110 / GB-78) protein is Membrane protein insertase YidC.